Reading from the N-terminus, the 234-residue chain is tRNA (guanine-N(1)-)-methyltransferase (234 aa).

Residues Gly-112 and 132-137 (IGDFIL) each bind S-adenosyl-L-methionine.

This sequence belongs to the RNA methyltransferase TrmD family. In terms of assembly, homodimer.

It is found in the cytoplasm. The enzyme catalyses guanosine(37) in tRNA + S-adenosyl-L-methionine = N(1)-methylguanosine(37) in tRNA + S-adenosyl-L-homocysteine + H(+). Functionally, specifically methylates guanosine-37 in various tRNAs. This Campylobacter jejuni subsp. doylei (strain ATCC BAA-1458 / RM4099 / 269.97) protein is tRNA (guanine-N(1)-)-methyltransferase.